The chain runs to 228 residues: 2-C-methyl-D-erythritol 4-phosphate cytidylyltransferase (228 aa).

It belongs to the IspD/TarI cytidylyltransferase family. IspD subfamily.

The catalysed reaction is 2-C-methyl-D-erythritol 4-phosphate + CTP + H(+) = 4-CDP-2-C-methyl-D-erythritol + diphosphate. It functions in the pathway isoprenoid biosynthesis; isopentenyl diphosphate biosynthesis via DXP pathway; isopentenyl diphosphate from 1-deoxy-D-xylulose 5-phosphate: step 2/6. Its function is as follows. Catalyzes the formation of 4-diphosphocytidyl-2-C-methyl-D-erythritol from CTP and 2-C-methyl-D-erythritol 4-phosphate (MEP). In Trichormus variabilis (strain ATCC 29413 / PCC 7937) (Anabaena variabilis), this protein is 2-C-methyl-D-erythritol 4-phosphate cytidylyltransferase.